The chain runs to 281 residues: NADPH-dependent 7-cyano-7-deazaguanine reductase (281 aa).

Substrate is bound at residue 87-89; that stretch reads VES. 89-90 contributes to the NADPH binding site; sequence SK. The Thioimide intermediate role is filled by cysteine 188. Aspartate 195 (proton donor) is an active-site residue. Position 227 to 228 (227 to 228) interacts with substrate; the sequence is HE. 256 to 257 is an NADPH binding site; sequence RG.

It belongs to the GTP cyclohydrolase I family. QueF type 2 subfamily. As to quaternary structure, homodimer.

Its subcellular location is the cytoplasm. The enzyme catalyses 7-aminomethyl-7-carbaguanine + 2 NADP(+) = 7-cyano-7-deazaguanine + 2 NADPH + 3 H(+). It participates in tRNA modification; tRNA-queuosine biosynthesis. Functionally, catalyzes the NADPH-dependent reduction of 7-cyano-7-deazaguanine (preQ0) to 7-aminomethyl-7-deazaguanine (preQ1). The protein is NADPH-dependent 7-cyano-7-deazaguanine reductase of Aliivibrio salmonicida (strain LFI1238) (Vibrio salmonicida (strain LFI1238)).